The chain runs to 204 residues: Lipoprotein signal peptidase (204 aa).

A disordered region spans residues 1-42; the sequence is MAEAERIIGTPDIPDAAGEGQERPDADPEREQQEQEQAPERT. Over residues 20-42 the composition is skewed to basic and acidic residues; the sequence is GQERPDADPEREQQEQEQAPERT. 3 helical membrane-spanning segments follow: residues 50 to 70, 100 to 120, and 126 to 146; these read VLFA…MLVV, FGEA…VVIA, and LHSL…LGNL. Catalysis depends on residues Asp163 and Asp177. A helical transmembrane segment spans residues 170-190; it reads FAVFNLADSAIVCGGILIVIL.

The protein belongs to the peptidase A8 family.

Its subcellular location is the cell membrane. It carries out the reaction Release of signal peptides from bacterial membrane prolipoproteins. Hydrolyzes -Xaa-Yaa-Zaa-|-(S,diacylglyceryl)Cys-, in which Xaa is hydrophobic (preferably Leu), and Yaa (Ala or Ser) and Zaa (Gly or Ala) have small, neutral side chains.. The protein operates within protein modification; lipoprotein biosynthesis (signal peptide cleavage). In terms of biological role, this protein specifically catalyzes the removal of signal peptides from prolipoproteins. The chain is Lipoprotein signal peptidase from Streptomyces coelicolor (strain ATCC BAA-471 / A3(2) / M145).